Consider the following 87-residue polypeptide: Retinal rod rhodopsin-sensitive cGMP 3',5'-cyclic phosphodiesterase subunit gamma (87 aa).

Residue Met-1 is modified to N-acetylmethionine. Residues 1-12 are compositionally biased toward basic and acidic residues; that stretch reads MNLEPPKAEIRS. Positions 1–55 are disordered; it reads MNLEPPKAEIRSATRVMGGPVTPRKGPPKFKQRQTRQFKSKPPKKGVQGFGDDIP. Residues 26-44 show a composition bias toward basic residues; the sequence is GPPKFKQRQTRQFKSKPPK.

The protein belongs to the rod/cone cGMP-PDE gamma subunit family. As to quaternary structure, oligomer composed of two catalytic chains (alpha and beta), an inhibitory chain (gamma) and the delta chain.

It catalyses the reaction 3',5'-cyclic GMP + H2O = GMP + H(+). Its function is as follows. Participates in processes of transmission and amplification of the visual signal. cGMP-PDEs are the effector molecules in G-protein-mediated phototransduction in vertebrate rods and cones. In Bos taurus (Bovine), this protein is Retinal rod rhodopsin-sensitive cGMP 3',5'-cyclic phosphodiesterase subunit gamma (PDE6G).